The following is a 284-amino-acid chain: Undecaprenyl-diphosphatase 2 (284 aa).

Helical transmembrane passes span 6-26 (VIFILKSVIIAIVEGLTEFIP), 46-66 (FAEMFEVVIQLGAILAVVVLY), 94-114 (FGMNVIIGCIPFAIIGVLFYD), 119-139 (LFNLQSVIIGFIVGGILLLVV), 183-203 (IMGGWIAGLNSPTAAEFSFFL), 227-247 (TLWIALVVGFIVAFIVSIIVM), and 262-282 (FAVYRIIMGVVLAVLAFTNII).

This sequence belongs to the UppP family.

It localises to the cell membrane. The catalysed reaction is di-trans,octa-cis-undecaprenyl diphosphate + H2O = di-trans,octa-cis-undecaprenyl phosphate + phosphate + H(+). In terms of biological role, catalyzes the dephosphorylation of undecaprenyl diphosphate (UPP). Confers resistance to bacitracin. The chain is Undecaprenyl-diphosphatase 2 from Clostridioides difficile (strain 630) (Peptoclostridium difficile).